We begin with the raw amino-acid sequence, 131 residues long: Small ribosomal subunit protein eS6 (131 aa).

The tract at residues 76–95 is disordered; the sequence is APPGFKPKRKGERRRKTVRG. The segment covering 81–93 has biased composition (basic residues); sequence KPKRKGERRRKTV.

Belongs to the eukaryotic ribosomal protein eS6 family.

This chain is Small ribosomal subunit protein eS6, found in Methanocaldococcus jannaschii (strain ATCC 43067 / DSM 2661 / JAL-1 / JCM 10045 / NBRC 100440) (Methanococcus jannaschii).